The chain runs to 939 residues: Zinc finger RNA-binding protein 2 (939 aa).

Disordered stretches follow at residues 1-72, 116-185, 217-264, 289-314, 360-389, 401-449, 545-590, and 906-939; these read MATS…AYGS, GRMT…IVTS, FYPP…PKAG, HLGG…SPRG, LEPA…ASSR, ALCE…DAQP, RLEE…SSDD, and RLGA…EGLV. Polar residues-rich tracts occupy residues 137 to 147 and 157 to 184; these read PHGSHSHAQPP and QPAS…SIVT. The segment covering 217 to 239 has biased composition (pro residues); that stretch reads FYPPAQPPPPPGPPQQLPPPPAP. Residues 516–549 are a coiled coil; sequence KVLEERMRKQRHLAEERLEQLRRWHAERRRLEEE. A DZF domain is found at 570-935; that stretch reads RPESPASAPL…GEKKRGRRGG (366 aa). Residues 906–916 are compositionally biased toward basic residues; it reads RLGARFRKRQR.

This is Zinc finger RNA-binding protein 2 (ZFR2) from Homo sapiens (Human).